A 927-amino-acid chain; its full sequence is DNA mismatch repair protein MutS (927 aa).

Position 646–653 (646–653 (GPNMAGKS)) interacts with ATP. Residues 904–927 (SAQPGSAEQGESPDKHDEGKNSRG) are disordered. The segment covering 915–927 (SPDKHDEGKNSRG) has biased composition (basic and acidic residues).

The protein belongs to the DNA mismatch repair MutS family.

This protein is involved in the repair of mismatches in DNA. It is possible that it carries out the mismatch recognition step. This protein has a weak ATPase activity. The polypeptide is DNA mismatch repair protein MutS (Desulfovibrio desulfuricans (strain ATCC 27774 / DSM 6949 / MB)).